The sequence spans 159 residues: Nucleotide-binding protein PLES_47741 (159 aa).

Belongs to the YajQ family.

In terms of biological role, nucleotide-binding protein. This Pseudomonas aeruginosa (strain LESB58) protein is Nucleotide-binding protein PLES_47741.